Reading from the N-terminus, the 438-residue chain is Serine hydroxymethyltransferase (438 aa).

(6S)-5,6,7,8-tetrahydrofolate contacts are provided by residues Leu-119 and 123 to 125 (GHL). Lys-228 carries the N6-(pyridoxal phosphate)lysine modification. 370 to 372 (SPF) contributes to the (6S)-5,6,7,8-tetrahydrofolate binding site.

It belongs to the SHMT family. Homodimer. It depends on pyridoxal 5'-phosphate as a cofactor.

The protein resides in the cytoplasm. The catalysed reaction is (6R)-5,10-methylene-5,6,7,8-tetrahydrofolate + glycine + H2O = (6S)-5,6,7,8-tetrahydrofolate + L-serine. Its pathway is one-carbon metabolism; tetrahydrofolate interconversion. The protein operates within amino-acid biosynthesis; glycine biosynthesis; glycine from L-serine: step 1/1. In terms of biological role, catalyzes the reversible interconversion of serine and glycine with tetrahydrofolate (THF) serving as the one-carbon carrier. This reaction serves as the major source of one-carbon groups required for the biosynthesis of purines, thymidylate, methionine, and other important biomolecules. Also exhibits THF-independent aldolase activity toward beta-hydroxyamino acids, producing glycine and aldehydes, via a retro-aldol mechanism. The sequence is that of Serine hydroxymethyltransferase from Pelodictyon phaeoclathratiforme (strain DSM 5477 / BU-1).